The primary structure comprises 210 residues: Na(+)-translocating NADH-quinone reductase subunit D (210 aa).

6 helical membrane passes run 42 to 62 (VVMT…ISTI), 66 to 86 (IPNS…VIVV), 103 to 123 (VYVG…AFAM), 131 to 151 (FMDG…VGAF), 154 to 174 (LFGS…NGGW), and 178 to 198 (NGLL…IWAV).

It belongs to the NqrDE/RnfAE family. As to quaternary structure, composed of six subunits; NqrA, NqrB, NqrC, NqrD, NqrE and NqrF.

It is found in the cell inner membrane. It catalyses the reaction a ubiquinone + n Na(+)(in) + NADH + H(+) = a ubiquinol + n Na(+)(out) + NAD(+). Its function is as follows. NQR complex catalyzes the reduction of ubiquinone-1 to ubiquinol by two successive reactions, coupled with the transport of Na(+) ions from the cytoplasm to the periplasm. NqrA to NqrE are probably involved in the second step, the conversion of ubisemiquinone to ubiquinol. The chain is Na(+)-translocating NADH-quinone reductase subunit D from Psychromonas ingrahamii (strain DSM 17664 / CCUG 51855 / 37).